The sequence spans 373 residues: mRNA export factor rae-1 (373 aa).

Methionine 1 carries the N-acetylmethionine modification. WD repeat units lie at residues 40-82 (APED…TFEG), 87-126 (NIPA…VAVV), 128-169 (THDG…NQTQ), and 276-315 (QEIY…KLKT).

Belongs to the WD repeat rae1 family. In terms of assembly, the nuclear pore complex (NPC) constitutes the exclusive means of nucleocytoplasmic transport. NPCs allow the passive diffusion of ions and small molecules and the active, nuclear transport receptor-mediated bidirectional transport of macromolecules such as proteins, RNAs, ribonucleoparticles (RNPs), and ribosomal subunits across the nuclear envelope. Interacts with rpm-1. As to expression, expressed along the ventral and dorsal nerve cords.

The protein localises to the nucleus. It is found in the nuclear pore complex. The protein resides in the cell projection. Its subcellular location is the axon. It localises to the synapse. Its function is as follows. Functions as a component of the nuclear pore complex (NPC). NPC components, collectively referred to as nucleoporins (NUPs), can play the role of both NPC structural components and of docking or interaction partners for transiently associated nuclear transport factors. It is specifically important for nuclear mRNA export. Has a role in neuronal development, where it acts downstream of rpm-1 to control axon termination and synapse formation in anterior lateral microtubule (ALM) and posterior lateral microtubule (PLM) mechanosensory neurons. In Caenorhabditis elegans, this protein is mRNA export factor rae-1.